The primary structure comprises 73 residues: Probable cytochrome b-c1 complex subunit 8 (73 aa).

The Mitochondrial matrix portion of the chain corresponds to 1–42; that stretch reads MGQASKVFGKQITYSVSPFQQKLFVNYFKNAIPHLRRGVKDN. Residues 43–60 form a helical membrane-spanning segment; it reads FFCSVPYFAALYITVNWA. Topologically, residues 61–73 are mitochondrial intermembrane; sequence NETYHNEMKDHWY.

This sequence belongs to the UQCRQ/QCR8 family. As to quaternary structure, component of the ubiquinol-cytochrome c oxidoreductase (cytochrome b-c1 complex, complex III, CIII), a multisubunit enzyme composed of 3 respiratory subunits cytochrome b, cytochrome c1 and Rieske protein, 2 core protein subunits, and additional low-molecular weight protein subunits. The complex exists as an obligatory dimer and forms supercomplexes (SCs) in the inner mitochondrial membrane with cytochrome c oxidase (complex IV, CIV).

The protein localises to the mitochondrion inner membrane. In terms of biological role, component of the ubiquinol-cytochrome c oxidoreductase, a multisubunit transmembrane complex that is part of the mitochondrial electron transport chain which drives oxidative phosphorylation. The respiratory chain contains 3 multisubunit complexes succinate dehydrogenase (complex II, CII), ubiquinol-cytochrome c oxidoreductase (cytochrome b-c1 complex, complex III, CIII) and cytochrome c oxidase (complex IV, CIV), that cooperate to transfer electrons derived from NADH and succinate to molecular oxygen, creating an electrochemical gradient over the inner membrane that drives transmembrane transport and the ATP synthase. The cytochrome b-c1 complex catalyzes electron transfer from ubiquinol to cytochrome c, linking this redox reaction to translocation of protons across the mitochondrial inner membrane, with protons being carried across the membrane as hydrogens on the quinol. In the process called Q cycle, 2 protons are consumed from the matrix, 4 protons are released into the intermembrane space and 2 electrons are passed to cytochrome c. This is Probable cytochrome b-c1 complex subunit 8 from Dictyostelium discoideum (Social amoeba).